We begin with the raw amino-acid sequence, 269 residues long: tRNA pseudouridine synthase A (269 aa).

D55 functions as the Nucleophile in the catalytic mechanism. Y111 contributes to the substrate binding site.

This sequence belongs to the tRNA pseudouridine synthase TruA family.

It carries out the reaction uridine(38/39/40) in tRNA = pseudouridine(38/39/40) in tRNA. Formation of pseudouridine at positions 38, 39 and 40 in the anticodon stem and loop of transfer RNAs. The protein is tRNA pseudouridine synthase A of Methanosarcina mazei (strain ATCC BAA-159 / DSM 3647 / Goe1 / Go1 / JCM 11833 / OCM 88) (Methanosarcina frisia).